Reading from the N-terminus, the 1108-residue chain is MWLKPEEVLLKNALKLWVTEKSNDYFVLQRRRGYGEDSGGLTGLLVGTLDTVLDSTAKVAPFRILHQTPDSQVYWTIACGASLEEISQHWDWLQQNIVRTLSVFDSGEDITSFVQGKIRGLIAEEGTSAGDEEDPERFREAVLRFERLFGLPQREKLVTYFSCSYWRGRVPNQGWIYLSTNFLCFYSYMLGNEVKLVYPWDEVSRLERTSSVLLAESIRVRVRGEDHFFSMLLRLQQTYLIMQQLADYAIVRFFDKETFHAEHPLANPLHITQRALEIHARNQSFRSFFRLPQEENLCEVYESFLWVPFSHVNTLGKICVSENYLCFASQDGSQCHLIIPLWEVFSVELPDRSSRALTVCLRGKRALRFSEVRDFERLAATIRRKCGTLGSPQHCITNPDEEGVMVGQSQAVSTEALMNVFHPHDAENLDPKMLKERMKEQSWQIHFAEYGRGTGMFCTKKTRDLIVRGVPETLRGELWMLFSGAVHDMISHPGYYGRLLEDCMGSSSLACDEIERDLHRSLPEHPAFQSDTGISALRRVLTAYAHRNPKIGYCQAMNILTSVLLLYAKEEEAFWLLVAVCERMLPDYFNRRIIGALVDQAVFEELIREHLTQLTEHMTDLSFFSSVSLSWFLTLFISVLPIESAVNVVDCFFYDGIKAILQLGLAVLDYNMDNLLCCNDDAEAVTVLNRFFDSVTNKDSPLPATVQQASATANDKSIQKVDISDLIKEAYEKYGDIRTEEVENMRKRNKLYVIQTLEDTTKQNVLRVVAQDVKFSASQLDELYLLFKNHDPSLPYLDQYQLDQSQFSSLFNLLQPWTTHTHSRSLARSAFHLLDENGDGLVNFKEFICGLDILYNRSFTEKLKLLFKLHLQPDSAEDGVIRKCPERGRAKVDLQEYLKQWQEDLQRREENIKDLPRINQVQFISLTKTLYSVFHGDEEEESLYRAVARVTSLLLRMEEVGRKLQDSSPQKTPQTTPTSTSQPESSPTKPTSPESETPAESRSTHDQPESPVSQHETAPSHSDITPNSTSHPSTPTSSPTETSSPVLDTPTDTPSSPCTVRDGDWSFSFEQILASLLNEPSVVRFFERVVNTDTLITRARKNQLKDAH.

GRAM domains are found at residues leucine 143–serine 210 and glutamine 283–aspartate 351. Residues glycine 469 to glycine 656 enclose the Rab-GAP TBC domain. Positions histidine 822–arginine 857 constitute an EF-hand domain. Aspartate 835, asparagine 837, aspartate 839, and glutamate 846 together coordinate Ca(2+). The interval glycine 961–threonine 1059 is disordered. Over residues serine 967–proline 998 the composition is skewed to low complexity. Residues serine 1010 to isoleucine 1024 show a composition bias toward polar residues. Residues threonine 1025 to proline 1057 show a composition bias toward low complexity.

It localises to the cytoplasm. Its subcellular location is the cytosol. Functionally, involved in vesicular recycling, probably as a GTPase-activating protein for Rab family protein(s). The sequence is that of TBC1 domain family member 8B (tbc1d8b) from Danio rerio (Zebrafish).